Consider the following 360-residue polypeptide: Chorismate synthase (360 aa).

Position 46 (arginine 46) interacts with NADP(+). FMN is bound by residues 123–125 (RSS), 235–236 (NA), glycine 275, 290–294 (KPTPS), and arginine 316.

The protein belongs to the chorismate synthase family. Homotetramer. It depends on FMNH2 as a cofactor.

The catalysed reaction is 5-O-(1-carboxyvinyl)-3-phosphoshikimate = chorismate + phosphate. It participates in metabolic intermediate biosynthesis; chorismate biosynthesis; chorismate from D-erythrose 4-phosphate and phosphoenolpyruvate: step 7/7. Catalyzes the anti-1,4-elimination of the C-3 phosphate and the C-6 proR hydrogen from 5-enolpyruvylshikimate-3-phosphate (EPSP) to yield chorismate, which is the branch point compound that serves as the starting substrate for the three terminal pathways of aromatic amino acid biosynthesis. This reaction introduces a second double bond into the aromatic ring system. The protein is Chorismate synthase of Wolinella succinogenes (strain ATCC 29543 / DSM 1740 / CCUG 13145 / JCM 31913 / LMG 7466 / NCTC 11488 / FDC 602W) (Vibrio succinogenes).